Reading from the N-terminus, the 210-residue chain is Regulatory protein RecX (210 aa).

Positions 28-47 (SRRQEEGAASSLFDREAEEK) are disordered.

Belongs to the RecX family.

It localises to the cytoplasm. In terms of biological role, modulates RecA activity. The polypeptide is Regulatory protein RecX (Corynebacterium efficiens (strain DSM 44549 / YS-314 / AJ 12310 / JCM 11189 / NBRC 100395)).